Reading from the N-terminus, the 373-residue chain is Dual-specificity RNA methyltransferase RlmN (373 aa).

The Proton acceptor role is filled by Glu94. Residues Glu100 to Asp339 enclose the Radical SAM core domain. Cys107 and Cys344 are oxidised to a cystine. Residues Cys114, Cys118, and Cys121 each contribute to the [4Fe-4S] cluster site. S-adenosyl-L-methionine is bound by residues Gly168 to Glu169, Ser200, Ser222 to His224, and Asn301. Cys344 functions as the S-methylcysteine intermediate in the catalytic mechanism.

The protein belongs to the radical SAM superfamily. RlmN family. [4Fe-4S] cluster serves as cofactor.

The protein resides in the cytoplasm. The catalysed reaction is adenosine(2503) in 23S rRNA + 2 reduced [2Fe-2S]-[ferredoxin] + 2 S-adenosyl-L-methionine = 2-methyladenosine(2503) in 23S rRNA + 5'-deoxyadenosine + L-methionine + 2 oxidized [2Fe-2S]-[ferredoxin] + S-adenosyl-L-homocysteine. The enzyme catalyses adenosine(37) in tRNA + 2 reduced [2Fe-2S]-[ferredoxin] + 2 S-adenosyl-L-methionine = 2-methyladenosine(37) in tRNA + 5'-deoxyadenosine + L-methionine + 2 oxidized [2Fe-2S]-[ferredoxin] + S-adenosyl-L-homocysteine. Specifically methylates position 2 of adenine 2503 in 23S rRNA and position 2 of adenine 37 in tRNAs. m2A2503 modification seems to play a crucial role in the proofreading step occurring at the peptidyl transferase center and thus would serve to optimize ribosomal fidelity. This Shewanella baltica (strain OS185) protein is Dual-specificity RNA methyltransferase RlmN.